We begin with the raw amino-acid sequence, 189 residues long: UPF0398 protein lhv_1265 (189 aa).

It belongs to the UPF0398 family.

The chain is UPF0398 protein lhv_1265 from Lactobacillus helveticus (strain DPC 4571).